The following is a 906-amino-acid chain: Protein translocase subunit SecA (906 aa).

ATP-binding positions include Gln-87, 105-109 (GEGKT), and Asp-507. Residues Cys-890, Cys-892, Cys-901, and His-902 each coordinate Zn(2+).

This sequence belongs to the SecA family. As to quaternary structure, monomer and homodimer. Part of the essential Sec protein translocation apparatus which comprises SecA, SecYEG and auxiliary proteins SecDF-YajC and YidC. Zn(2+) serves as cofactor.

The protein localises to the cell inner membrane. The protein resides in the cytoplasm. It catalyses the reaction ATP + H2O + cellular proteinSide 1 = ADP + phosphate + cellular proteinSide 2.. Its function is as follows. Part of the Sec protein translocase complex. Interacts with the SecYEG preprotein conducting channel. Has a central role in coupling the hydrolysis of ATP to the transfer of proteins into and across the cell membrane, serving both as a receptor for the preprotein-SecB complex and as an ATP-driven molecular motor driving the stepwise translocation of polypeptide chains across the membrane. This is Protein translocase subunit SecA from Laribacter hongkongensis (strain HLHK9).